The following is a 180-amino-acid chain: O-acetyl-ADP-ribose deacetylase (180 aa).

One can recognise a Macro domain in the interval 1–175 (MKPQIDVIHG…LYQRLLTQRG (175 aa)). Substrate is bound by residues 11–12 (DI), Asn25, 33–35 (GVD), and 122–126 (STGVY). Asp35 acts as the Proton acceptor in catalysis.

It belongs to the MacroD-type family. YmdB subfamily. Homodimer. Interacts with RNase III.

It carries out the reaction 3''-O-acetyl-ADP-D-ribose + H2O = ADP-D-ribose + acetate + H(+). It catalyses the reaction 2''-O-acetyl-ADP-D-ribose + H2O = ADP-D-ribose + acetate + H(+). In terms of biological role, deacetylates O-acetyl-ADP ribose to yield ADP-ribose and free acetate. Down-regulates ribonuclease 3 (RNase III) activity. Acts by interacting directly with the region of the ribonuclease that is required for dimerization/activation. The protein is O-acetyl-ADP-ribose deacetylase of Enterobacter cloacae subsp. cloacae (strain ATCC 13047 / DSM 30054 / NBRC 13535 / NCTC 10005 / WDCM 00083 / NCDC 279-56).